A 184-amino-acid polypeptide reads, in one-letter code: NADH-quinone oxidoreductase subunit B (184 aa).

The [4Fe-4S] cluster site is built by C63, C64, C128, and C158.

This sequence belongs to the complex I 20 kDa subunit family. As to quaternary structure, NDH-1 is composed of 14 different subunits. Subunits NuoB, C, D, E, F, and G constitute the peripheral sector of the complex. Requires [4Fe-4S] cluster as cofactor.

It is found in the cell inner membrane. It catalyses the reaction a quinone + NADH + 5 H(+)(in) = a quinol + NAD(+) + 4 H(+)(out). In terms of biological role, NDH-1 shuttles electrons from NADH, via FMN and iron-sulfur (Fe-S) centers, to quinones in the respiratory chain. The immediate electron acceptor for the enzyme in this species is believed to be ubiquinone. Couples the redox reaction to proton translocation (for every two electrons transferred, four hydrogen ions are translocated across the cytoplasmic membrane), and thus conserves the redox energy in a proton gradient. This Xylella fastidiosa (strain M12) protein is NADH-quinone oxidoreductase subunit B.